The sequence spans 220 residues: UPF0319 protein YccT (220 aa).

An N-terminal signal peptide occupies residues 1-20; sequence MKTGIVTTLIALCLPVSVFA.

The protein belongs to the UPF0319 family.

In Escherichia coli (strain 55989 / EAEC), this protein is UPF0319 protein YccT.